A 162-amino-acid chain; its full sequence is Phosphopantetheine adenylyltransferase (162 aa).

Serine 11 lines the substrate pocket. ATP contacts are provided by residues 11–12 (SF) and histidine 19. Substrate is bound by residues lysine 43, valine 76, and arginine 90. Residues 91–93 (GLR), glutamate 101, and 126–132 (HLYISSS) contribute to the ATP site.

This sequence belongs to the bacterial CoaD family. As to quaternary structure, homohexamer. It depends on Mg(2+) as a cofactor.

It localises to the cytoplasm. It catalyses the reaction (R)-4'-phosphopantetheine + ATP + H(+) = 3'-dephospho-CoA + diphosphate. Its pathway is cofactor biosynthesis; coenzyme A biosynthesis; CoA from (R)-pantothenate: step 4/5. Reversibly transfers an adenylyl group from ATP to 4'-phosphopantetheine, yielding dephospho-CoA (dPCoA) and pyrophosphate. The sequence is that of Phosphopantetheine adenylyltransferase from Streptococcus pneumoniae (strain CGSP14).